Reading from the N-terminus, the 156-residue chain is Cyanate hydratase (156 aa).

Active-site residues include R96, E99, and S122.

It belongs to the cyanase family.

The enzyme catalyses cyanate + hydrogencarbonate + 3 H(+) = NH4(+) + 2 CO2. Catalyzes the reaction of cyanate with bicarbonate to produce ammonia and carbon dioxide. This chain is Cyanate hydratase, found in Burkholderia thailandensis (strain ATCC 700388 / DSM 13276 / CCUG 48851 / CIP 106301 / E264).